Consider the following 1264-residue polypeptide: Ubiquitin carboxyl-terminal hydrolase usp-48 (1264 aa).

A USP domain is found at 108-430; sequence AGLINGGNFC…ACYGLLYRRR (323 aa). C117 functions as the Nucleophile in the catalytic mechanism. Catalysis depends on H366, which acts as the Proton acceptor. Disordered stretches follow at residues 390-415, 522-610, and 630-679; these read IPKP…KEKY, AKGE…IMDT, and TVEV…PVSS. Basic and acidic residues-rich tracts occupy residues 403 to 415 and 532 to 543; these read KTEK…KEKY and EASENEEKKKNE. Positions 516-547 form a coiled coil; the sequence is AQEYEVAKGEKKKKKKEASENEEKKKNEEDEA. Low complexity predominate over residues 565–575; that stretch reads SEPSTSAAATE. Composition is skewed to polar residues over residues 587-599 and 663-678; these read ETPN…STQV and NGTN…QPVS.

This sequence belongs to the peptidase C19 family. Broadly expressed. Expressed in germline.

It localises to the nucleus. The protein localises to the chromosome. The catalysed reaction is Thiol-dependent hydrolysis of ester, thioester, amide, peptide and isopeptide bonds formed by the C-terminal Gly of ubiquitin (a 76-residue protein attached to proteins as an intracellular targeting signal).. In terms of biological role, recognizes and hydrolyzes the peptide bond at the C-terminal Gly of ubiquitin. Involved in the processing of poly-ubiquitin precursors as well as that of ubiquitinated proteins. Required post-developmentally to restrict the plasticity of epidermal cells, probably by regulating gene expression. The protein is Ubiquitin carboxyl-terminal hydrolase usp-48 of Caenorhabditis elegans.